The primary structure comprises 290 residues: MDLTNATIITAMVTPFQESGEIDFDKLPQLVDYLLANHTEGVILAGTTGESPTLTHEEELQLFQRIIELIDGRIPIICGVGTNDTRDSVAFVKELATIAGIDAVLAVVPYYNKPNQEGMYQHFKTIAEASELPIILYNVPGRTAACLEVETTLRLAQLEKIVAIKECAGLDAITELIERAPKDFLVYTGEDGLAFATKALGGQGVISVASHVFGSSMYEMYQALEQGNLPEAAKIQRQLLPKMNALFSVPSPAPVKAALNHLGIPVGNLRLPLVACTPEEEQRIIRTLEI.

Threonine 48 provides a ligand contact to pyruvate. The Proton donor/acceptor role is filled by tyrosine 137. Lysine 165 serves as the catalytic Schiff-base intermediate with substrate. Isoleucine 206 contributes to the pyruvate binding site.

It belongs to the DapA family. In terms of assembly, homotetramer; dimer of dimers.

Its subcellular location is the cytoplasm. The catalysed reaction is L-aspartate 4-semialdehyde + pyruvate = (2S,4S)-4-hydroxy-2,3,4,5-tetrahydrodipicolinate + H2O + H(+). It participates in amino-acid biosynthesis; L-lysine biosynthesis via DAP pathway; (S)-tetrahydrodipicolinate from L-aspartate: step 3/4. Its function is as follows. Catalyzes the condensation of (S)-aspartate-beta-semialdehyde [(S)-ASA] and pyruvate to 4-hydroxy-tetrahydrodipicolinate (HTPA). The sequence is that of 4-hydroxy-tetrahydrodipicolinate synthase from Enterococcus faecalis (strain ATCC 700802 / V583).